A 365-amino-acid chain; its full sequence is Fructose-1,6-bisphosphatase class 1 2 (365 aa).

Positions 100, 122, 124, and 125 each coordinate Mg(2+). Substrate contacts are provided by residues 125–128 (DGSS) and N221. E293 lines the Mg(2+) pocket.

Belongs to the FBPase class 1 family. In terms of assembly, homotetramer. Mg(2+) serves as cofactor.

Its subcellular location is the cytoplasm. The catalysed reaction is beta-D-fructose 1,6-bisphosphate + H2O = beta-D-fructose 6-phosphate + phosphate. The protein operates within carbohydrate biosynthesis; gluconeogenesis. The chain is Fructose-1,6-bisphosphatase class 1 2 from Cupriavidus metallidurans (strain ATCC 43123 / DSM 2839 / NBRC 102507 / CH34) (Ralstonia metallidurans).